The following is a 498-amino-acid chain: Glycerol kinase (498 aa).

ADP is bound at residue threonine 11. Residues threonine 11, serine 12, and serine 13 each contribute to the ATP site. Threonine 11 provides a ligand contact to sn-glycerol 3-phosphate. Arginine 15 is an ADP binding site. 4 residues coordinate sn-glycerol 3-phosphate: arginine 81, glutamate 82, tyrosine 133, and aspartate 242. 5 residues coordinate glycerol: arginine 81, glutamate 82, tyrosine 133, aspartate 242, and glutamine 243. ADP-binding residues include threonine 264 and glycine 307. ATP contacts are provided by threonine 264, glycine 307, glutamine 311, and glycine 412. Residues glycine 412 and asparagine 416 each contribute to the ADP site.

It belongs to the FGGY kinase family.

It catalyses the reaction glycerol + ATP = sn-glycerol 3-phosphate + ADP + H(+). It functions in the pathway polyol metabolism; glycerol degradation via glycerol kinase pathway; sn-glycerol 3-phosphate from glycerol: step 1/1. Inhibited by fructose 1,6-bisphosphate (FBP). Its function is as follows. Key enzyme in the regulation of glycerol uptake and metabolism. Catalyzes the phosphorylation of glycerol to yield sn-glycerol 3-phosphate. The chain is Glycerol kinase from Acidovorax sp. (strain JS42).